The following is a 163-amino-acid chain: General stress protein 16O (163 aa).

The segment covering 19-30 has biased composition (basic and acidic residues); that stretch reads QKELSGEKKETE. 2 disordered regions span residues 19–55 and 115–163; these read QKEL…TLVT and ADVE…QDSK. Residues 89–123 form a dksA C4-type; degenerate zinc finger; sequence CEKTGQEIPYERLEAVPYARMTVEAQADVEDDLET. The segment covering 127–146 has biased composition (basic and acidic residues); the sequence is SYEREFHEQVKDLSNKETID.

This is General stress protein 16O (yocK) from Bacillus subtilis (strain 168).